Here is a 161-residue protein sequence, read N- to C-terminus: Protein-export protein SecB (161 aa).

The protein belongs to the SecB family. As to quaternary structure, homotetramer, a dimer of dimers. One homotetramer interacts with 1 SecA dimer.

The protein localises to the cytoplasm. In terms of biological role, one of the proteins required for the normal export of preproteins out of the cell cytoplasm. It is a molecular chaperone that binds to a subset of precursor proteins, maintaining them in a translocation-competent state. It also specifically binds to its receptor SecA. This Shewanella pealeana (strain ATCC 700345 / ANG-SQ1) protein is Protein-export protein SecB.